Reading from the N-terminus, the 255-residue chain is MVTICVIPARYGSTRFPGKPLAFLKNKPIIQHVYERAKSSKMIDEVFVATDDSRILHTVESFGGKAIMTSSKHPSGTDRIAEAVDKLLQEGYNLQESSIVINLQGDEPLIKKEMIDQLIDLMKNENDSIGTLAKRIEKEDDFFNPNIVKVVFDKNGYALYFSRSPIPFDREKFIKGFSKNNFMYKHIGIYGYNVRILKNFVGLPMSRLEEIESLEQLRALENGIKIKVGLTEYDSFGIDTPEDLEVAEKCLNTYS.

This sequence belongs to the KdsB family.

The protein resides in the cytoplasm. It catalyses the reaction 3-deoxy-alpha-D-manno-oct-2-ulosonate + CTP = CMP-3-deoxy-beta-D-manno-octulosonate + diphosphate. It functions in the pathway nucleotide-sugar biosynthesis; CMP-3-deoxy-D-manno-octulosonate biosynthesis; CMP-3-deoxy-D-manno-octulosonate from 3-deoxy-D-manno-octulosonate and CTP: step 1/1. The protein operates within bacterial outer membrane biogenesis; lipopolysaccharide biosynthesis. Its function is as follows. Activates KDO (a required 8-carbon sugar) for incorporation into bacterial lipopolysaccharide in Gram-negative bacteria. The protein is 3-deoxy-manno-octulosonate cytidylyltransferase of Thermodesulfovibrio yellowstonii (strain ATCC 51303 / DSM 11347 / YP87).